Reading from the N-terminus, the 350-residue chain is GTPase Obg (350 aa).

Residues methionine 1–leucine 159 enclose the Obg domain. The region spanning alanine 160 to aspartate 337 is the OBG-type G domain. GTP is bound by residues glycine 166–serine 173, phenylalanine 191–tyrosine 195, aspartate 213–glycine 216, asparagine 287–aspartate 290, and serine 318–leucine 320. Mg(2+) contacts are provided by serine 173 and threonine 193.

This sequence belongs to the TRAFAC class OBG-HflX-like GTPase superfamily. OBG GTPase family. Monomer. It depends on Mg(2+) as a cofactor.

The protein localises to the cytoplasm. Its function is as follows. An essential GTPase which binds GTP, GDP and possibly (p)ppGpp with moderate affinity, with high nucleotide exchange rates and a fairly low GTP hydrolysis rate. Plays a role in control of the cell cycle, stress response, ribosome biogenesis and in those bacteria that undergo differentiation, in morphogenesis control. In Xanthomonas campestris pv. campestris (strain 8004), this protein is GTPase Obg.